The chain runs to 337 residues: Alanine racemase (337 aa).

The active-site Proton acceptor; specific for D-alanine is the Lys-33. Lys-33 carries the N6-(pyridoxal phosphate)lysine modification. Arg-118 serves as a coordination point for substrate. The Proton acceptor; specific for L-alanine role is filled by Tyr-246. Residue Met-292 coordinates substrate.

It belongs to the alanine racemase family. The cofactor is pyridoxal 5'-phosphate.

The enzyme catalyses L-alanine = D-alanine. It participates in amino-acid biosynthesis; D-alanine biosynthesis; D-alanine from L-alanine: step 1/1. Its function is as follows. Catalyzes the interconversion of L-alanine and D-alanine. May also act on other amino acids. This Campylobacter curvus (strain 525.92) protein is Alanine racemase (alr).